The chain runs to 423 residues: ER-bound oxygenase mpaB' (423 aa).

The Lumenal portion of the chain corresponds to 1–22 (MSLSLPPALSELARALPYSRTQ). A helical transmembrane segment spans residues 23–41 (WLPILVGFLIGYPLLIKAL). Topologically, residues 42–423 (RYKRLGEMKK…ISRTGKCPFH (382 aa)) are cytoplasmic.

Belongs to the mpaB oxygenase family.

It is found in the endoplasmic reticulum membrane. It catalyses the reaction 4-farnesyl-3,5-dihydroxy-6-methylphthalide + AH2 + 2 O2 = (4E,8E)-10-(4,6-dihydroxy-7-methyl-3-oxo-1,3-dihydro-2-benzofuran-5-yl)-4,8-dimethyldeca-4,8-dienoate + acetone + A + H2O + H(+). The protein operates within secondary metabolite biosynthesis; terpenoid biosynthesis. Functionally, ER-bound oxygenase; part of the gene cluster that mediates the biosynthesis of mycophenolic acid (MPA), the first isolated antibiotic natural product in the world obtained from a culture of Penicillium brevicompactum in 1893. MpaB' catalyzes the oxidative cleavage the C19-C20 double bond in farnesyl-DHMP (FDHMP) to yield FDHMP-3C via a mycophenolic aldehyde intermediate. The first step of the pathway is the synthesis of 5-methylorsellinic acid (5MOA) by the cytosolic polyketide synthase mpaC. 5MOA is then converted to the phthalide compound 5,7-dihydroxy-4,6-dimethylphthalide (DHMP) by the endoplasmic reticulum-bound cytochrome P450 monooxygenase mpaDE. MpaDE first catalyzes hydroxylation of 5-MOA to 4,6-dihydroxy-2-(hydroxymethyl)-3-methylbenzoic acid (DHMB). MpaDE then acts as a lactone synthase that catalyzes the ring closure to convert DHMB into DHMP. The next step is the prenylation of DHMP by the Golgi apparatus-associated prenyltransferase mpaA to yield farnesyl-DHMP (FDHMP). The ER-bound oxygenase mpaB then mediates the oxidative cleavage the C19-C20 double bond in FDHMP to yield FDHMP-3C via a mycophenolic aldehyde intermediate. The O-methyltransferase mpaG catalyzes the methylation of FDHMP-3C to yield MFDHMP-3C. After the cytosolic methylation of FDHMP-3C, MFDHMP-3C enters into peroxisomes probably via free diffusion due to its low molecular weight. Upon a peroxisomal CoA ligation reaction, catalyzed by a beta-oxidation component enzyme acyl-CoA ligase ACL891, MFDHMP-3C-CoA would then be restricted to peroxisomes for the following beta-oxidation pathway steps. The peroxisomal beta-oxidation machinery than converts MFDHMP-3C-CoA into MPA_CoA, via a beta-oxidation chain-shortening process. Finally mpaH acts as a peroxisomal acyl-CoA hydrolase with high substrate specificity toward MPA-CoA to release the final product MPA. The chain is ER-bound oxygenase mpaB' from Penicillium brevicompactum.